The following is an 871-amino-acid chain: Protein argonaute-2 (871 aa).

One can recognise a PAZ domain in the interval 232–351 (PVIEFMCEVL…LPLEVCNIVA (120 aa)). Interaction with guide RNA stretches follow at residues 314-319 (YFKDRH) and 536-578 (GKTP…LCLK). The region spanning 529-830 (LVVVILPGKT…VAFRARYHLV (302 aa)) is the Piwi domain. An interaction with GW182 family members region spans residues 599–602 (FQQP). Aspartate 609 contacts a divalent metal cation. Residues 662 to 672 (LIQFYKSTRFK) are interaction with GW182 family members. Position 681 (aspartate 681) interacts with a divalent metal cation. Interaction with guide RNA regions lie at residues 721-722 (KR), 765-773 (HAGIQGTSR), and 802-824 (YVRC…VAFR). Histidine 819 contacts a divalent metal cation. The interval 834–856 (HDSAEGSHTSGQSNGRDQQALAK) is disordered. Residues 839-850 (GSHTSGQSNGRD) show a composition bias toward polar residues.

It belongs to the argonaute family. Ago subfamily. Component of the RISC loading complex (RLC), or micro-RNA (miRNA) loading complex (miRLC), which is composed of dicer1, ago2 and tarbp2. Note that the trimeric RLC/miRLC is also referred to as RISC. It depends on Mg(2+) as a cofactor. The cofactor is Mn(2+).

It localises to the cytoplasm. It is found in the P-body. It carries out the reaction Endonucleolytic cleavage to 5'-phosphomonoester.. Required for RNA-mediated gene silencing (RNAi) by the RNA-induced silencing complex (RISC). The 'minimal RISC' appears to include ago2 bound to a short guide RNA such as a microRNA (miRNA) or short interfering RNA (siRNA). These guide RNAs direct RISC to complementary mRNAs that are targets for RISC-mediated gene silencing. The precise mechanism of gene silencing depends on the degree of complementarity between the miRNA or siRNA and its target. Binding of RISC to a perfectly complementary mRNA generally results in silencing due to endonucleolytic cleavage of the mRNA specifically by ago2. Binding of RISC to a partially complementary mRNA results in silencing through inhibition of translation, and this is independent of endonuclease activity. The inhibition of translational initiation leads to the accumulation of the affected mRNA in cytoplasmic processing bodies (P-bodies), where mRNA degradation may subsequently occur. The polypeptide is Protein argonaute-2 (ago2) (Xenopus tropicalis (Western clawed frog)).